Reading from the N-terminus, the 428-residue chain is Enolase (428 aa).

A (2R)-2-phosphoglycerate-binding site is contributed by Gln-167. Residue Glu-209 is the Proton donor of the active site. Mg(2+) contacts are provided by Asp-246, Glu-289, and Asp-316. (2R)-2-phosphoglycerate contacts are provided by Lys-341, Arg-370, Ser-371, and Lys-392. Lys-341 functions as the Proton acceptor in the catalytic mechanism.

The protein belongs to the enolase family. In terms of assembly, component of the RNA degradosome, a multiprotein complex involved in RNA processing and mRNA degradation. Requires Mg(2+) as cofactor.

It is found in the cytoplasm. Its subcellular location is the secreted. The protein resides in the cell surface. The catalysed reaction is (2R)-2-phosphoglycerate = phosphoenolpyruvate + H2O. The protein operates within carbohydrate degradation; glycolysis; pyruvate from D-glyceraldehyde 3-phosphate: step 4/5. Catalyzes the reversible conversion of 2-phosphoglycerate (2-PG) into phosphoenolpyruvate (PEP). It is essential for the degradation of carbohydrates via glycolysis. This Saccharophagus degradans (strain 2-40 / ATCC 43961 / DSM 17024) protein is Enolase.